Reading from the N-terminus, the 833-residue chain is Neuronal tyrosine-phosphorylated phosphoinositide-3-kinase adapter 1 (833 aa).

Disordered regions lie at residues 1-45, 64-191, 219-423, 645-674, and 736-765; these read MNLL…PGVR, PASQ…LQRL, VFRG…RELP, EEDGARAWNGSTEGPGKVEHEDRGPVPSGI, and HTPRPCSQPRDALSQTHPVLPLPLPPQPAR. Basic and acidic residues predominate over residues 8–25; the sequence is TKLEWRQHKEEEAKRSSS. The tract at residues 76–181 is involved in CYFIP1- and NCKAP1-binding; the sequence is STMAPRSLSC…DESCAPAPSP (106 aa). Positions 111–120 are enriched in basic residues; it reads PPAKPRRHPS. Positions 162–171 are enriched in polar residues; the sequence is SPNTQLSVSF. Positions 220 to 239 are enriched in gly residues; it reads FRGGGRSGGGLAGPPLGSGG. Residues 248–257 show a composition bias toward acidic residues; the sequence is SDSEDSEAIY. Positions 275 to 285 are enriched in pro residues; that stretch reads GPPPLTAPSPP.

It belongs to the NYAP family. As to quaternary structure, interacts with ACOT9, ARHGAP26 and PIK3R2. Interacts with components of the WAVE1 complex, CYFIP1 and NCKAP1; this interaction mediates PI3K-WAVE1 association and actin cytoskeleton remodeling. Post-translationally, phosphorylated on tyrosine residues by FYN upon stimulation with CNTN5. Phosphorylation begins at 14 dpc, reaches a peak during perinatal days in brain, then gradually decreases. Expressed predominantly in brain where it is present in the neurons, but not in astrocytes or oligodendrites.

Functionally, activates PI3K and concomitantly recruits the WAVE1 complex to the close vicinity of PI3K and regulates neuronal morphogenesis. The protein is Neuronal tyrosine-phosphorylated phosphoinositide-3-kinase adapter 1 (Nyap1) of Mus musculus (Mouse).